A 355-amino-acid polypeptide reads, in one-letter code: NADH-quinone oxidoreductase subunit H (355 aa).

8 consecutive transmembrane segments (helical) span residues 25 to 45 (VVRI…LILW), 91 to 111 (WLYL…WAVI), 126 to 146 (LLYA…AGWA), 170 to 190 (MGFA…SEIV), 205 to 225 (FLSW…ISGI), 253 to 273 (MAFA…SALA), 290 to 310 (FIPG…VFIW), and 330 to 350 (VFLP…MSPL).

It belongs to the complex I subunit 1 family. As to quaternary structure, NDH-1 is composed of 14 different subunits. Subunits NuoA, H, J, K, L, M, N constitute the membrane sector of the complex.

The protein localises to the cell inner membrane. The enzyme catalyses a quinone + NADH + 5 H(+)(in) = a quinol + NAD(+) + 4 H(+)(out). In terms of biological role, NDH-1 shuttles electrons from NADH, via FMN and iron-sulfur (Fe-S) centers, to quinones in the respiratory chain. The immediate electron acceptor for the enzyme in this species is believed to be ubiquinone. Couples the redox reaction to proton translocation (for every two electrons transferred, four hydrogen ions are translocated across the cytoplasmic membrane), and thus conserves the redox energy in a proton gradient. This subunit may bind ubiquinone. The sequence is that of NADH-quinone oxidoreductase subunit H from Burkholderia cenocepacia (strain HI2424).